Here is a 274-residue protein sequence, read N- to C-terminus: NH(3)-dependent NAD(+) synthetase (274 aa).

46 to 53 (GISGGQDS) serves as a coordination point for ATP. Aspartate 52 is a binding site for Mg(2+). Arginine 140 is a deamido-NAD(+) binding site. Threonine 160 contacts ATP. Mg(2+) is bound at residue glutamate 165. Residues lysine 173 and aspartate 180 each coordinate deamido-NAD(+). Lysine 189 and threonine 211 together coordinate ATP. Residue 260–261 (HK) coordinates deamido-NAD(+).

This sequence belongs to the NAD synthetase family. In terms of assembly, homodimer.

It carries out the reaction deamido-NAD(+) + NH4(+) + ATP = AMP + diphosphate + NAD(+) + H(+). Its pathway is cofactor biosynthesis; NAD(+) biosynthesis; NAD(+) from deamido-NAD(+) (ammonia route): step 1/1. Its function is as follows. Catalyzes the ATP-dependent amidation of deamido-NAD to form NAD. Uses ammonia as a nitrogen source. The protein is NH(3)-dependent NAD(+) synthetase of Rhodococcus erythropolis (strain PR4 / NBRC 100887).